A 176-amino-acid chain; its full sequence is NAD(P)H-quinone oxidoreductase subunit 6, chloroplastic (176 aa).

A run of 5 helical transmembrane segments spans residues 10–30 (FLLV…VLLP), 32–52 (PIFS…LYIL), 61–81 (AQLL…VMFM), 92–112 (LWTI…FLLM), and 152–172 (FFLP…GAIS).

It belongs to the complex I subunit 6 family. In terms of assembly, NDH is composed of at least 16 different subunits, 5 of which are encoded in the nucleus.

Its subcellular location is the plastid. It localises to the chloroplast thylakoid membrane. The catalysed reaction is a plastoquinone + NADH + (n+1) H(+)(in) = a plastoquinol + NAD(+) + n H(+)(out). The enzyme catalyses a plastoquinone + NADPH + (n+1) H(+)(in) = a plastoquinol + NADP(+) + n H(+)(out). Functionally, NDH shuttles electrons from NAD(P)H:plastoquinone, via FMN and iron-sulfur (Fe-S) centers, to quinones in the photosynthetic chain and possibly in a chloroplast respiratory chain. The immediate electron acceptor for the enzyme in this species is believed to be plastoquinone. Couples the redox reaction to proton translocation, and thus conserves the redox energy in a proton gradient. This Arabidopsis thaliana (Mouse-ear cress) protein is NAD(P)H-quinone oxidoreductase subunit 6, chloroplastic (ndhG).